Consider the following 95-residue polypeptide: Non-specific lipid-transfer protein (95 aa).

Disulfide bonds link C4/C52, C14/C29, and C50/C90.

This sequence belongs to the plant LTP family. Seeds.

Plant non-specific lipid-transfer proteins transfer phospholipids as well as galactolipids across membranes. May play a role in wax or cutin deposition in the cell walls of expanding epidermal cells and certain secretory tissues. The sequence is that of Non-specific lipid-transfer protein from Eleusine coracana (Indian finger millet).